The chain runs to 423 residues: Serine--tRNA ligase (423 aa).

229–231 (TAE) is a binding site for L-serine. 260 to 262 (RKE) contacts ATP. L-serine is bound at residue glutamate 283. Residue 347–350 (EISS) participates in ATP binding. Serine 383 is a binding site for L-serine.

This sequence belongs to the class-II aminoacyl-tRNA synthetase family. Type-1 seryl-tRNA synthetase subfamily. Homodimer. The tRNA molecule binds across the dimer.

It localises to the cytoplasm. It carries out the reaction tRNA(Ser) + L-serine + ATP = L-seryl-tRNA(Ser) + AMP + diphosphate + H(+). The enzyme catalyses tRNA(Sec) + L-serine + ATP = L-seryl-tRNA(Sec) + AMP + diphosphate + H(+). The protein operates within aminoacyl-tRNA biosynthesis; selenocysteinyl-tRNA(Sec) biosynthesis; L-seryl-tRNA(Sec) from L-serine and tRNA(Sec): step 1/1. In terms of biological role, catalyzes the attachment of serine to tRNA(Ser). Is also able to aminoacylate tRNA(Sec) with serine, to form the misacylated tRNA L-seryl-tRNA(Sec), which will be further converted into selenocysteinyl-tRNA(Sec). In Syntrophotalea carbinolica (strain DSM 2380 / NBRC 103641 / GraBd1) (Pelobacter carbinolicus), this protein is Serine--tRNA ligase.